Reading from the N-terminus, the 209-residue chain is Mitochondrial import inner membrane translocase subunit Tim23 (209 aa).

3 helical membrane passes run Phe-73 to Met-93, Ala-125 to Ile-145, and Gly-172 to Tyr-194.

Belongs to the Tim17/Tim22/Tim23 family. As to quaternary structure, component of the TIM23 complex at least composed of TIMM23, TIMM17 (TIMM17A or TIMM17B) and TIMM50; within this complex, directly interacts with TIMM50. The complex interacts with the TIMM44 component of the PAM complex and with DNAJC15. Upon mitochondrial depolarization, interacts with PINK1; the interaction is required for PINK1 accumulation at the outer mitochondrial membrane, kinase activation by autophosphorylation and PRKN recruitement to mitochondria.

It is found in the mitochondrion inner membrane. Essential component of the TIM23 complex, a complex that mediates the translocation of transit peptide-containing proteins across the mitochondrial inner membrane. Has a role in the activation of stress-induced mitophagy by protecting PINK1 from OMA1-mediated degradation and facilitating its accumulation at the outer mitochondrial membrane in response to depolarization. The chain is Mitochondrial import inner membrane translocase subunit Tim23 (TIMM23) from Bos taurus (Bovine).